The primary structure comprises 1163 residues: Putative beta-glucuronidase (1163 aa).

An N-terminal signal peptide occupies residues 1–20 (MPRFLKYILGLFLISISAFG).

It belongs to the glycosyl hydrolase 2 family.

The protein localises to the periplasm. The catalysed reaction is a beta-D-glucuronoside + H2O = D-glucuronate + an alcohol. Functionally, glycoside hydrolase involved in ulvan degradation. Ulvan is the main polysaccharide component of the Ulvales (green seaweed) cell wall. It is composed of disaccharide building blocks comprising 3-sulfated rhamnose (Rha3S) linked to D-glucuronic acid (GlcA), L-iduronic acid (IduA), or D-xylose (Xyl). The sequence is that of Putative beta-glucuronidase from Formosa agariphila (strain DSM 15362 / KCTC 12365 / LMG 23005 / KMM 3901 / M-2Alg 35-1).